Consider the following 78-residue polypeptide: Defensin-like protein 201 (78 aa).

A signal peptide spans 1–22; it reads MRNLINFAVLIMTIFIVSASGA. 4 disulfides stabilise this stretch: Cys32-Cys78, Cys41-Cys61, Cys46-Cys71, and Cys50-Cys73.

Belongs to the DEFL family.

It is found in the secreted. This chain is Defensin-like protein 201, found in Arabidopsis thaliana (Mouse-ear cress).